Reading from the N-terminus, the 122-residue chain is MIQPQSRLKVADNTGAKEVMCIRVLGGSNRKFANIGDVIVCSVKDATPGGVVKKGDVVKAVIVRTRKGVRREDGTYIRFDDNAAVLIREDGTPRGTRIFGPVARELRDKDFMKIVSLAPEVL.

It belongs to the universal ribosomal protein uL14 family. Part of the 50S ribosomal subunit. Forms a cluster with proteins L3 and L19. In the 70S ribosome, L14 and L19 interact and together make contacts with the 16S rRNA in bridges B5 and B8.

Its function is as follows. Binds to 23S rRNA. Forms part of two intersubunit bridges in the 70S ribosome. The polypeptide is Large ribosomal subunit protein uL14 (Caldicellulosiruptor bescii (strain ATCC BAA-1888 / DSM 6725 / KCTC 15123 / Z-1320) (Anaerocellum thermophilum)).